Here is a 286-residue protein sequence, read N- to C-terminus: Beta-lactamase SHV-29 (286 aa).

An N-terminal signal peptide occupies residues 1–21; the sequence is MRYIRLCIISLLATLPLAVHA. The active-site Acyl-ester intermediate is Ser66. Cys73 and Cys119 form a disulfide bridge. The active-site Proton acceptor is the Glu164. 230–232 is a binding site for substrate; that stretch reads KTG.

The protein belongs to the class-A beta-lactamase family.

The enzyme catalyses a beta-lactam + H2O = a substituted beta-amino acid. The protein is Beta-lactamase SHV-29 (bla) of Klebsiella pneumoniae.